A 297-amino-acid chain; its full sequence is Adrenocorticotropic hormone receptor (297 aa).

Topologically, residues M1–H23 are extracellular. 2 N-linked (GlcNAc...) asparagine glycosylation sites follow: N12 and N17. Cystine bridges form between C21/C253 and C245/C251. The chain crosses the membrane as a helical span at residues V24–V49. Topologically, residues I50 to P58 are cytoplasmic. A helical membrane pass occupies residues M59–L79. At E80–D104 the chain is on the extracellular side. The chain crosses the membrane as a helical span at residues I105–V126. At D127–T147 the chain is on the cytoplasmic side. Residues I148 to F168 traverse the membrane as a helical segment. Residues S169 to S180 lie on the Extracellular side of the membrane. The helical transmembrane segment at L181–M199 threads the bilayer. Topologically, residues A200 to G217 are cytoplasmic. A helical membrane pass occupies residues A218–F244. The Extracellular segment spans residues C245 to S256. A helical transmembrane segment spans residues L257–F278. The Cytoplasmic portion of the chain corresponds to R279 to L297. C296 is lipidated: S-palmitoyl cysteine.

The protein belongs to the G-protein coupled receptor 1 family. Homodimer. Interacts with corticotropin (ACTH). Interacts with MRAP; this interaction targets MC2R to the plasma membrane. Interacts with MRAP2; competing with MRAP for binding to MC2R and impairing the binding of corticotropin (ACTH). In terms of processing, ubiquitinated by MGRN1 that may be involved in post-endocytic trafficking and/or degradation of internalized receptor.

It localises to the cell membrane. Its function is as follows. Hormone receptor primarily expressed in adrenal cortex that plays a key role in regulating adrenocortical function. Upon corticotropin (ACTH) binding, facilitates the release of adrenal glucocorticoids, including cortisol and corticosterone. In addition, MC2R is required for fetal and neonatal adrenal gland development. Mechanistically, activates adenylate cyclase (cAMP), the MAPK cascade as well as the cAMP-dependent protein kinase A pathway leading to steroidogenic factor 1/NR5A1-mediated transcriptional activation. The chain is Adrenocorticotropic hormone receptor (MC2R) from Cavia porcellus (Guinea pig).